Reading from the N-terminus, the 282-residue chain is Centromere protein P (282 aa).

Residues 1–80 (MEQKYEEDIQ…KDLRRQTEIN (80 aa)) adopt a coiled-coil conformation.

Belongs to the CENP-P/CTF19 family.

The protein resides in the nucleus. It localises to the chromosome. The protein localises to the centromere. In terms of biological role, probable component of a centromeric complex involved in assembly of kinetochore proteins, mitotic progression and chromosome segregation. This chain is Centromere protein P (cenpp), found in Danio rerio (Zebrafish).